Consider the following 870-residue polypeptide: DNA mismatch repair protein MutS (870 aa).

629–636 (GPNMGGKS) is an ATP binding site.

This sequence belongs to the DNA mismatch repair MutS family.

Its function is as follows. This protein is involved in the repair of mismatches in DNA. It is possible that it carries out the mismatch recognition step. This protein has a weak ATPase activity. This chain is DNA mismatch repair protein MutS, found in Polaromonas naphthalenivorans (strain CJ2).